The primary structure comprises 118 residues: HTH-type transcriptional regulator CmtR (118 aa).

Residues 3 to 97 (TCEMRESALA…ELVQVVLAVD (95 aa)) form the HTH arsR-type domain. Cd(2+) contacts are provided by Cys57, Cys61, and Cys102.

In terms of assembly, homodimer.

Metal-responsive transcriptional repressor for the cmt operon. Binding of cadmium or lead causes the repressor to dissociate from the DNA. In Mycobacterium bovis (strain ATCC BAA-935 / AF2122/97), this protein is HTH-type transcriptional regulator CmtR (cmtR).